A 252-amino-acid chain; its full sequence is Deoxyuridine 5'-triphosphate nucleotidohydrolase, mitochondrial (252 aa).

The transit peptide at 1-69 (MTPLCPRPAL…AGRLSQGCRG (69 aa)) directs the protein to the mitochondrion. Phosphoserine is present on residues Cys11, Ser88, and Ser99. Residues 78–104 (WKGELPKAGGSPAPGPETPAISPSKRA) are disordered. Residues 173 to 175 (RSG), 187 to 193 (GVIDEDY), Gly198, Arg241, and 246 to 247 (FG) contribute to the dUTP site.

The protein belongs to the dUTPase family. As to quaternary structure, homotrimer. Requires Mg(2+) as cofactor. Nuclear isoform 2 is phosphorylated in vivo on Ser-11, a reaction that can be catalyzed in vitro by CDC2. Phosphorylation in mature T-cells occurs in a cell cycle-dependent manner. Isoform 3 is not phosphorylated. In terms of tissue distribution, found in a variety of tissues. Isoform 3 expression is constitutive, while isoform 2 expression correlates with the onset of DNA replication (at protein level). Isoform 2 degradation coincides with the cessation of nuclear DNA replication (at protein level).

Its subcellular location is the nucleus. The protein resides in the mitochondrion. It catalyses the reaction dUTP + H2O = dUMP + diphosphate + H(+). It functions in the pathway pyrimidine metabolism; dUMP biosynthesis; dUMP from dCTP (dUTP route): step 2/2. With respect to regulation, phosphorylation is necessary for activity. Functionally, catalyzes the cleavage of 2'-deoxyuridine 5'-triphosphate (dUTP) into 2'-deoxyuridine 5'-monophosphate (dUMP) and inorganic pyrophosphate and through its action efficiently prevents uracil misincorporation into DNA and at the same time provides dUMP, the substrate for de novo thymidylate biosynthesis. Inhibits peroxisome proliferator-activated receptor (PPAR) activity by binding of its N-terminal to PPAR, preventing the latter's dimerization with retinoid X receptor. Essential for embryonic development. This is Deoxyuridine 5'-triphosphate nucleotidohydrolase, mitochondrial (DUT) from Homo sapiens (Human).